Here is a 243-residue protein sequence, read N- to C-terminus: Carboxy-S-adenosyl-L-methionine synthase (243 aa).

Residues Y40, 65–67 (GCS), 90–91 (DN), 118–119 (DI), N133, and R200 contribute to the S-adenosyl-L-methionine site.

This sequence belongs to the class I-like SAM-binding methyltransferase superfamily. Cx-SAM synthase family. In terms of assembly, homodimer.

The enzyme catalyses prephenate + S-adenosyl-L-methionine = carboxy-S-adenosyl-L-methionine + 3-phenylpyruvate + H2O. In terms of biological role, catalyzes the conversion of S-adenosyl-L-methionine (SAM) to carboxy-S-adenosyl-L-methionine (Cx-SAM). The polypeptide is Carboxy-S-adenosyl-L-methionine synthase (Shewanella putrefaciens (strain CN-32 / ATCC BAA-453)).